The primary structure comprises 872 residues: Alanine--tRNA ligase (872 aa).

The Zn(2+) site is built by His-567, His-571, Cys-669, and His-673.

It belongs to the class-II aminoacyl-tRNA synthetase family. The cofactor is Zn(2+).

The protein localises to the cytoplasm. The catalysed reaction is tRNA(Ala) + L-alanine + ATP = L-alanyl-tRNA(Ala) + AMP + diphosphate. Catalyzes the attachment of alanine to tRNA(Ala) in a two-step reaction: alanine is first activated by ATP to form Ala-AMP and then transferred to the acceptor end of tRNA(Ala). Also edits incorrectly charged Ser-tRNA(Ala) and Gly-tRNA(Ala) via its editing domain. This Streptococcus pyogenes serotype M18 (strain MGAS8232) protein is Alanine--tRNA ligase.